A 210-amino-acid chain; its full sequence is Probable septum site-determining protein MinC (210 aa).

Belongs to the MinC family. In terms of assembly, interacts with MinD and FtsZ.

Functionally, cell division inhibitor that blocks the formation of polar Z ring septums. Rapidly oscillates between the poles of the cell to destabilize FtsZ filaments that have formed before they mature into polar Z rings. Prevents FtsZ polymerization. The polypeptide is Probable septum site-determining protein MinC (Clostridium novyi (strain NT)).